A 140-amino-acid chain; its full sequence is Large ribosomal subunit protein uL11 (140 aa).

Belongs to the universal ribosomal protein uL11 family. As to quaternary structure, part of the ribosomal stalk of the 50S ribosomal subunit. Interacts with L10 and the large rRNA to form the base of the stalk. L10 forms an elongated spine to which L12 dimers bind in a sequential fashion forming a multimeric L10(L12)X complex. Post-translationally, one or more lysine residues are methylated.

Functionally, forms part of the ribosomal stalk which helps the ribosome interact with GTP-bound translation factors. In Staphylococcus carnosus (strain TM300), this protein is Large ribosomal subunit protein uL11.